The primary structure comprises 107 residues: Precursor of CEP14 (107 aa).

Residues 1-21 (MAVRLIPTIWLFIVFAVIVSA) form the signal peptide. Positions 22-92 (LPSLVSSRKL…GKLRSRHLST (71 aa)) are excised as a propeptide. N-linked (GlcNAc...) asparagine glycosylation is present at N39. The interval 43-76 (REEEKSHMPHVTKTSTLSALPKGKIPNSTPSKKG) is disordered. Hydroxyproline is present on residues P101 and P103.

Belongs to the C-terminally encoded plant signaling peptide (CEP) family. As to quaternary structure, interacts with CEP receptors (e.g. CEPR1 and CEPR2). In terms of processing, the mature small signaling peptide is generated by proteolytic processing of the longer precursor.

The protein resides in the secreted. The protein localises to the extracellular space. Its subcellular location is the apoplast. Functionally, extracellular signaling peptide that may regulate primary root growth rate and systemic nitrogen (N)-demand signaling. This is Precursor of CEP14 from Arabidopsis thaliana (Mouse-ear cress).